We begin with the raw amino-acid sequence, 212 residues long: Large ribosomal subunit protein uL1 (212 aa).

Belongs to the universal ribosomal protein uL1 family. In terms of assembly, part of the 50S ribosomal subunit.

Binds directly to 23S rRNA. Probably involved in E site tRNA release. Functionally, protein L1 is also a translational repressor protein, it controls the translation of its operon by binding to its mRNA. In Haloferax volcanii (strain ATCC 29605 / DSM 3757 / JCM 8879 / NBRC 14742 / NCIMB 2012 / VKM B-1768 / DS2) (Halobacterium volcanii), this protein is Large ribosomal subunit protein uL1.